We begin with the raw amino-acid sequence, 433 residues long: Sensor protein RstB (433 aa).

The Cytoplasmic segment spans residues 1-3 (MKK). A helical membrane pass occupies residues 4–24 (LFIQFYLLLFVCFLVMSLLVG). Over 25–135 (LVYKFTAERA…PYLYYLHQMR (111 aa)) the chain is Periplasmic. A helical transmembrane segment spans residues 136-156 (LLDIALIAFIAISLAFPVFIW). The Cytoplasmic segment spans residues 157-433 (MRPHWQDMLK…WHNIPQFTSA (277 aa)). An HAMP domain is found at 158-210 (RPHWQDMLKLEAAAQRFGDGHLNERIHFDEGSSFERLGVAFNQMADNINALIA). Positions 218 to 425 (GIAHELRTPL…RFSFSWPLWH (208 aa)) constitute a Histidine kinase domain. The residue at position 276 (H276) is a Phosphohistidine; by autocatalysis.

In terms of processing, autophosphorylated.

The protein resides in the cell inner membrane. The enzyme catalyses ATP + protein L-histidine = ADP + protein N-phospho-L-histidine.. Member of the two-component regulatory system RstB/RstA. RstB functions as a membrane-associated protein kinase that phosphorylates RstA. The sequence is that of Sensor protein RstB (rstB) from Escherichia coli (strain K12).